The sequence spans 793 residues: Alanine--tRNA ligase, mitochondrial (793 aa).

ATP contacts are provided by residues Arg88, Trp187, and 224–226 (IWN). 2 residues coordinate L-alanine: Asn226 and Asp249. Gly253 is an ATP binding site. The Zn(2+) site is built by His594, His598, Cys706, and His710.

Belongs to the class-II aminoacyl-tRNA synthetase family. In terms of assembly, monomer. The cofactor is Zn(2+).

It is found in the mitochondrion. The enzyme catalyses tRNA(Ala) + L-alanine + ATP = L-alanyl-tRNA(Ala) + AMP + diphosphate. Functionally, catalyzes the attachment of alanine to tRNA(Ala) in a two-step reaction: alanine is first activated by ATP to form Ala-AMP and then transferred to the acceptor end of tRNA(Ala). Also edits incorrectly charged tRNA(Ala) via its editing domain. In Caenorhabditis elegans, this protein is Alanine--tRNA ligase, mitochondrial.